A 137-amino-acid chain; its full sequence is MERTFAIIKPDAVERNIIGKILEKVETAGFRIVGMKKILLSKCEAEGFYYVHKERPFFNDLCSFMSRSPVVVMVLERENAINTWREVMGATNPANAEAGTIRKDFGLSIEENSVHGSDSPESAAYEIPYFFSQLELL.

ATP contacts are provided by Lys9, Phe57, Arg85, Thr91, Arg102, and Asn112. His115 functions as the Pros-phosphohistidine intermediate in the catalytic mechanism.

Belongs to the NDK family. In terms of assembly, homotetramer. The cofactor is Mg(2+).

The protein resides in the cytoplasm. The catalysed reaction is a 2'-deoxyribonucleoside 5'-diphosphate + ATP = a 2'-deoxyribonucleoside 5'-triphosphate + ADP. It catalyses the reaction a ribonucleoside 5'-diphosphate + ATP = a ribonucleoside 5'-triphosphate + ADP. In terms of biological role, major role in the synthesis of nucleoside triphosphates other than ATP. The ATP gamma phosphate is transferred to the NDP beta phosphate via a ping-pong mechanism, using a phosphorylated active-site intermediate. In Geobacter sulfurreducens (strain ATCC 51573 / DSM 12127 / PCA), this protein is Nucleoside diphosphate kinase.